A 158-amino-acid polypeptide reads, in one-letter code: uncharacterized protein (158 aa).

In terms of biological role, the presence of the two linear plasmids, termed pGKL1 and pGKL2, in strains of Kluyveromyces lactis confers the killer phenotype to the host cell, by promoting the secretion of a toxin able to inhibit the growth of sensitive strains. This is an uncharacterized protein from Kluyveromyces lactis (strain ATCC 8585 / CBS 2359 / DSM 70799 / NBRC 1267 / NRRL Y-1140 / WM37) (Yeast).